The primary structure comprises 367 residues: 2-aminoethylphosphonate--pyruvate transaminase (367 aa).

At Lys193 the chain carries N6-(pyridoxal phosphate)lysine.

It belongs to the class-V pyridoxal-phosphate-dependent aminotransferase family. PhnW subfamily. In terms of assembly, homodimer. The cofactor is pyridoxal 5'-phosphate.

The enzyme catalyses (2-aminoethyl)phosphonate + pyruvate = phosphonoacetaldehyde + L-alanine. Functionally, involved in phosphonate degradation. This chain is 2-aminoethylphosphonate--pyruvate transaminase, found in Vibrio parahaemolyticus serotype O3:K6 (strain RIMD 2210633).